The sequence spans 281 residues: Penicillin-insensitive murein endopeptidase (281 aa).

The signal sequence occupies residues 1–24; the sequence is MKQGLIGVLALALGATLLSSAVWA. 3 disulfides stabilise this stretch: Cys-49–Cys-270, Cys-192–Cys-240, and Cys-221–Cys-228. Residues His-115, His-118, Asp-125, and His-216 each coordinate Zn(2+). The tract at residues 230–271 is disordered; that stretch reads EQSEPPIGDGCGAELTSWFQPKQPSSEAPEKTTPPPLPPSCQ. Over residues 246–255 the composition is skewed to polar residues; that stretch reads SWFQPKQPSS.

This sequence belongs to the peptidase M74 family. As to quaternary structure, dimer. Requires Zn(2+) as cofactor.

It is found in the periplasm. In terms of biological role, murein endopeptidase that cleaves the D-alanyl-meso-2,6-diamino-pimelyl amide bond that connects peptidoglycan strands. Likely plays a role in the removal of murein from the sacculus. The polypeptide is Penicillin-insensitive murein endopeptidase (mepA) (Pectobacterium atrosepticum (strain SCRI 1043 / ATCC BAA-672) (Erwinia carotovora subsp. atroseptica)).